Here is a 396-residue protein sequence, read N- to C-terminus: F-box protein pof13 (396 aa).

The region spanning 40–89 (KNSNLFLLNRDIWSLIINYLDAFDILRLMHSSRQFYYWLRKSAVDECCFN) is the F-box domain.

Part of a SCF (SKP1-cullin-F-box) protein ligase complex. Interacts with skp1.

It localises to the cytoplasm. It participates in protein modification; protein ubiquitination. The polypeptide is F-box protein pof13 (pof13) (Schizosaccharomyces pombe (strain 972 / ATCC 24843) (Fission yeast)).